The chain runs to 424 residues: Riboflavin biosynthesis protein RibBA (424 aa).

A DHBP synthase region spans residues 1 to 206 (MVTCEAGIAS…VDDLITYRWT (206 aa)). D-ribulose 5-phosphate contacts are provided by residues 32–33 (RE), D37, 145–149 (RPGHT), and E169. E33 is a Mg(2+) binding site. A Mg(2+)-binding site is contributed by H148. The GTP cyclohydrolase II stretch occupies residues 207–424 (FDSLVEHVSS…YETVERTSCC (218 aa)). 257 to 261 (RVHSE) is a GTP binding site. Zn(2+) contacts are provided by C262, C273, and C275. Residues Q278, 301–303 (EGR), and T323 contribute to the GTP site. Catalysis depends on D335, which acts as the Proton acceptor; for GTP cyclohydrolase activity. The active-site Nucleophile; for GTP cyclohydrolase activity is R337. GTP-binding residues include T358 and K363.

It in the N-terminal section; belongs to the DHBP synthase family. This sequence in the C-terminal section; belongs to the GTP cyclohydrolase II family. The cofactor is Mg(2+). Mn(2+) is required as a cofactor. It depends on Zn(2+) as a cofactor.

The catalysed reaction is D-ribulose 5-phosphate = (2S)-2-hydroxy-3-oxobutyl phosphate + formate + H(+). The enzyme catalyses GTP + 4 H2O = 2,5-diamino-6-hydroxy-4-(5-phosphoribosylamino)-pyrimidine + formate + 2 phosphate + 3 H(+). It functions in the pathway cofactor biosynthesis; riboflavin biosynthesis; 2-hydroxy-3-oxobutyl phosphate from D-ribulose 5-phosphate: step 1/1. The protein operates within cofactor biosynthesis; riboflavin biosynthesis; 5-amino-6-(D-ribitylamino)uracil from GTP: step 1/4. Catalyzes the conversion of D-ribulose 5-phosphate to formate and 3,4-dihydroxy-2-butanone 4-phosphate. Its function is as follows. Catalyzes the conversion of GTP to 2,5-diamino-6-ribosylamino-4(3H)-pyrimidinone 5'-phosphate (DARP), formate and pyrophosphate. This is Riboflavin biosynthesis protein RibBA from Chlamydia muridarum (strain MoPn / Nigg).